Consider the following 409-residue polypeptide: Elongation factor Tu, chloroplastic (409 aa).

Positions 10–214 constitute a tr-type G domain; it reads KPHVNIGTIG…NVDSYIPTPA (205 aa). The segment at 19-26 is G1; that stretch reads GHVDHGKT. 19 to 26 contributes to the GTP binding site; sequence GHVDHGKT. Thr26 contributes to the Mg(2+) binding site. The segment at 60 to 64 is G2; it reads GITIN. The segment at 81-84 is G3; the sequence is DCPG. Residues 81 to 85 and 136 to 139 each bind GTP; these read DCPGH and NKED. Residues 136 to 139 are G4; it reads NKED. The tract at residues 174–176 is G5; sequence SAL.

Belongs to the TRAFAC class translation factor GTPase superfamily. Classic translation factor GTPase family. EF-Tu/EF-1A subfamily.

It localises to the plastid. Its subcellular location is the chloroplast. The catalysed reaction is GTP + H2O = GDP + phosphate + H(+). Functionally, GTP hydrolase that promotes the GTP-dependent binding of aminoacyl-tRNA to the A-site of ribosomes during protein biosynthesis. The chain is Elongation factor Tu, chloroplastic (tufA) from Ostreococcus tauri.